The following is a 1061-amino-acid chain: Chimeric ERCC6-PGBD3 protein (1061 aa).

The disordered stretch occupies residues 1–39 (MPNEGIPHSSQTQEQDCLQSQPVSNNEEMAIKQESGGDG). Residues 8 to 27 (HSSQTQEQDCLQSQPVSNNE) are compositionally biased toward polar residues. The residue at position 158 (S158) is a Phosphoserine. A Glycyl lysine isopeptide (Lys-Gly) (interchain with G-Cter in SUMO2) cross-link involves residue K255. 4 disordered regions span residues 287-323 (KQGCNKRAARKAPAPVTPPAPVQNKNKPNKKARVLSK), 344-466 (GKVG…QRLS), 494-521 (VIQPPENATAPVSDEESGDEEGGTINNL), and 537-573 (SDAESDSDDPSYAPKDDSPDEVPSTFTVQQPPPSRRR). The span at 353–363 (RPWESDMRPEA) shows a compositional bias: basic and acidic residues. The segment covering 364–392 (EGDSEGEESEYFPTEEEEEEEDDEVEGAE) has biased composition (acidic residues). 2 positions are modified to phosphoserine: S429 and S430. A compositionally biased stretch (basic and acidic residues) spans 451 to 462 (RYRDDGDEDYYK). The span at 506-515 (SDEESGDEEG) shows a compositional bias: acidic residues. S554 bears the Phosphoserine mark.

In terms of tissue distribution, expressed in heart and oocytes, but not in granulosa cells (at protein level).

It is found in the nucleus. Functionally, involved in repair of DNA damage following UV irradiation, acting either in the absence of ERCC6 or synergistically with ERCC6. Involved in the regulation of gene expression. In the absence of ERCC6, induces the expression of genes characteristic of interferon-like antiviral responses. This response is almost completely suppressed in the presence of ERCC6. In the presence of ERCC6, regulates the expression of genes involved in metabolism regulation, including IGFBP5 and IGFBP7. In vitro binds to PGBD3-related transposable elements, called MER85s; these non-autonomous 140 bp elements are characterized by the presence of PGBD3 terminal inverted repeats and the absence of internal transposase ORF. The polypeptide is Chimeric ERCC6-PGBD3 protein (Homo sapiens (Human)).